The primary structure comprises 273 residues: 3-methyl-2-oxobutanoate hydroxymethyltransferase (273 aa).

Mg(2+) contacts are provided by aspartate 53 and aspartate 92. 3-methyl-2-oxobutanoate-binding positions include 53 to 54 (DS), aspartate 92, and lysine 120. A Mg(2+)-binding site is contributed by glutamate 122. The active-site Proton acceptor is the glutamate 189.

This sequence belongs to the PanB family. As to quaternary structure, homodecamer; pentamer of dimers. Mg(2+) is required as a cofactor.

Its subcellular location is the cytoplasm. The catalysed reaction is 3-methyl-2-oxobutanoate + (6R)-5,10-methylene-5,6,7,8-tetrahydrofolate + H2O = 2-dehydropantoate + (6S)-5,6,7,8-tetrahydrofolate. The protein operates within cofactor biosynthesis; (R)-pantothenate biosynthesis; (R)-pantoate from 3-methyl-2-oxobutanoate: step 1/2. In terms of biological role, catalyzes the reversible reaction in which hydroxymethyl group from 5,10-methylenetetrahydrofolate is transferred onto alpha-ketoisovalerate to form ketopantoate. This chain is 3-methyl-2-oxobutanoate hydroxymethyltransferase, found in Cupriavidus taiwanensis (strain DSM 17343 / BCRC 17206 / CCUG 44338 / CIP 107171 / LMG 19424 / R1) (Ralstonia taiwanensis (strain LMG 19424)).